Here is a 337-residue protein sequence, read N- to C-terminus: uncharacterized protein (337 aa).

The ABC transporter domain occupies 5 to 235 (VEFDNVSRLY…PRTPFVAGFV (231 aa)). 37-44 (GPSGSGKT) serves as a coordination point for ATP.

It belongs to the ABC transporter superfamily.

In terms of biological role, probably part of the ABC transporter complex YdcSTUV. Probably responsible for energy coupling to the transport system. This is an uncharacterized protein from Escherichia coli (strain K12).